Reading from the N-terminus, the 900-residue chain is uncharacterized protein (900 aa).

Positions 1–16 (MGSNKEAKNIDSKNDR) are enriched in basic and acidic residues. Disordered regions lie at residues 1-84 (MGSN…KLSS), 103-160 (NSSR…PDPS), 512-556 (NFNQ…KKSG), 568-613 (LAST…KSAN), and 648-676 (KRSS…NSFP). The segment covering 17-27 (GLTSITSNKIS) has biased composition (polar residues). The span at 30–58 (KAHDNHTSSMITEHKNADKEKGKQEKESR) shows a compositional bias: basic and acidic residues. 2 stretches are compositionally biased toward low complexity: residues 63 to 76 (QSSS…PQVS) and 103 to 127 (NSSR…QLSK). Residue Ser-105 is modified to Phosphoserine. The segment covering 129-143 (GLHHHHTSNNKHSHR) has biased composition (basic residues). Low complexity predominate over residues 528–537 (SSRSLSLPSS). A compositionally biased stretch (basic residues) spans 543-553 (KRKKSPTKATK). Low complexity-rich tracts occupy residues 570-601 (STSH…SSPP) and 665-676 (SPISSNSDNSFP).

This is an uncharacterized protein from Saccharomyces cerevisiae (strain ATCC 204508 / S288c) (Baker's yeast).